The chain runs to 794 residues: MNIDDKLEGLFLKCGGIDEMQSSRTMVVMGGVSGQSTVSGELQDSVLQDRSMPHQEILAADEVLQESEMRQQDMISHDELMVHEETVKNDEEQMETHERLPQGLQYALNVPISVKQEITFTDVSEQLMRDKKQIREPVDLQKKKKRKQRSPAKILTINEDGSLGLKTPKSHVCEHCNAAFRTNYHLQRHVFIHTGEKPFQCSQCDMRFIQKYLLQRHEKIHTGEKPFRCDECGMRFIQKYHMERHKRTHSGEKPYQCEYCLQYFSRTDRVLKHKRMCHENHDKKLNRCAIKGGLLTSEEDSGFSTSPKDNSLPKKKRQKTEKKSSGMDKESALDKSDLKKDKNDYLPLYSSSTKVKDEYMVAEYAVEMPHSSVGGSHLEDASGEIHPPKLVLKKINSKRSLKQPLEQNQTISPLSTYEESKVSKYAFELVDKQALLDSEGNADIDQVDNLQEGPSKPVHSSTNYDDAMQFLKKKRYLQAASNNSREYALNVGTIASQPSVTQAAVASVIDESTTASILESQALNVEIKSNHDKNVIPDEVLQTLLDHYSHKANGQHEISFSVADTEVTSSISINSSEVPEVTPSENVGSSSQASSSDKANMLQEYSKFLQQALDRTSQNDAYLNSPSLNFVTDNQTLPNQPAFSSIDKQVYATMPINSFRSGMNSPLRTTPDKSHFGLIVGDSQHSFPFSGDETNHASATSTQDFLDQVTSQKKAEAQPVHQAYQMSSFEQPFRAPYHGSRAGIATQFSTANGQVNLRGPGTSAEFSEFPLVNVNDNRAGMTSSPDATTGQTFG.

K6 is covalently cross-linked (Glycyl lysine isopeptide (Lys-Gly) (interchain with G-Cter in SUMO2)). Phosphoserine is present on S51. Glycyl lysine isopeptide (Lys-Gly) (interchain with G-Cter in SUMO2) cross-links involve residues K88, K115, and K132. The C2H2-type 1 zinc-finger motif lies at 171–193; that stretch reads HVCEHCNAAFRTNYHLQRHVFIH. Residue T194 is modified to Phosphothreonine. 2 consecutive C2H2-type zinc fingers follow at residues 199 to 221 and 227 to 249; these read FQCS…EKIH and FRCD…KRTH. At S250 the chain carries Phosphoserine. The C2H2-type 4 zinc-finger motif lies at 255–278; the sequence is YQCEYCLQYFSRTDRVLKHKRMCH. Residue K291 forms a Glycyl lysine isopeptide (Lys-Gly) (interchain with G-Cter in SUMO2) linkage. Positions 298-336 are disordered; the sequence is EEDSGFSTSPKDNSLPKKKRQKTEKKSSGMDKESALDKS. Phosphoserine occurs at positions 301 and 306. K308 is covalently cross-linked (Glycyl lysine isopeptide (Lys-Gly) (interchain with G-Cter in SUMO2)). Over residues 321–336 the composition is skewed to basic and acidic residues; sequence EKKSSGMDKESALDKS. K356 participates in a covalent cross-link: Glycyl lysine isopeptide (Lys-Gly) (interchain with G-Cter in SUMO1); alternate. K356 participates in a covalent cross-link: Glycyl lysine isopeptide (Lys-Gly) (interchain with G-Cter in SUMO2); alternate. K402 is covalently cross-linked (Glycyl lysine isopeptide (Lys-Gly) (interchain with G-Cter in SUMO2)). S412 carries the post-translational modification Phosphoserine. Residues K421 and K424 each participate in a glycyl lysine isopeptide (Lys-Gly) (interchain with G-Cter in SUMO2) cross-link. The segment covering 574–588 has biased composition (polar residues); that stretch reads NSSEVPEVTPSENVG. The tract at residues 574 to 596 is disordered; that stretch reads NSSEVPEVTPSENVGSSSQASSS. K607 bears the N6-acetyllysine mark. S665 and S784 each carry phosphoserine.

This sequence belongs to the krueppel C2H2-type zinc-finger protein family. Interacts with HNRNPDL. Interacts with the 5FMC complex; the interaction requires association with CHTOP. Interacts with CAVIN1. Sumoylated with SUMO2. Desumoylated by SENP3, resulting in the stimulation of transcription of its target genes.

The protein localises to the nucleus. Involved in transcriptional regulation. Represses the transcription of a number of genes including gastrin, stromelysin and enolase. Binds to the G-rich box in the enhancer region of these genes. This Homo sapiens (Human) protein is Zinc finger protein 148 (ZNF148).